A 186-amino-acid chain; its full sequence is Ribosome-recycling factor (186 aa).

It belongs to the RRF family.

It localises to the cytoplasm. Responsible for the release of ribosomes from messenger RNA at the termination of protein biosynthesis. May increase the efficiency of translation by recycling ribosomes from one round of translation to another. The polypeptide is Ribosome-recycling factor (Bordetella petrii (strain ATCC BAA-461 / DSM 12804 / CCUG 43448)).